The following is a 430-amino-acid chain: Putative FBD-associated F-box protein At5g56440 (430 aa).

Residues Met-1–Pro-49 enclose the F-box domain. The FBD domain occupies Gln-349 to Ser-399.

This Arabidopsis thaliana (Mouse-ear cress) protein is Putative FBD-associated F-box protein At5g56440.